The primary structure comprises 405 residues: Acetate kinase (405 aa).

Asn7 provides a ligand contact to Mg(2+). Residue Lys14 participates in ATP binding. Arg92 contacts substrate. Residue Asp149 is the Proton donor/acceptor of the active site. Residues 209 to 213 (HLGNG) and 284 to 286 (DMR) each bind ATP. Glu389 serves as a coordination point for Mg(2+).

The protein belongs to the acetokinase family. In terms of assembly, homodimer. Mg(2+) serves as cofactor. Requires Mn(2+) as cofactor.

Its subcellular location is the cytoplasm. It carries out the reaction acetate + ATP = acetyl phosphate + ADP. It functions in the pathway metabolic intermediate biosynthesis; acetyl-CoA biosynthesis; acetyl-CoA from acetate: step 1/2. In terms of biological role, catalyzes the formation of acetyl phosphate from acetate and ATP. Can also catalyze the reverse reaction. This is Acetate kinase from Borrelia garinii subsp. bavariensis (strain ATCC BAA-2496 / DSM 23469 / PBi) (Borreliella bavariensis).